The primary structure comprises 168 residues: Crossover junction endodeoxyribonuclease RuvC (168 aa).

Active-site residues include D7, E64, and D136. Residues D7, E64, and D136 each contribute to the Mg(2+) site.

Belongs to the RuvC family. As to quaternary structure, homodimer which binds Holliday junction (HJ) DNA. The HJ becomes 2-fold symmetrical on binding to RuvC with unstacked arms; it has a different conformation from HJ DNA in complex with RuvA. In the full resolvosome a probable DNA-RuvA(4)-RuvB(12)-RuvC(2) complex forms which resolves the HJ. Requires Mg(2+) as cofactor.

It localises to the cytoplasm. The catalysed reaction is Endonucleolytic cleavage at a junction such as a reciprocal single-stranded crossover between two homologous DNA duplexes (Holliday junction).. The RuvA-RuvB-RuvC complex processes Holliday junction (HJ) DNA during genetic recombination and DNA repair. Endonuclease that resolves HJ intermediates. Cleaves cruciform DNA by making single-stranded nicks across the HJ at symmetrical positions within the homologous arms, yielding a 5'-phosphate and a 3'-hydroxyl group; requires a central core of homology in the junction. The consensus cleavage sequence is 5'-(A/T)TT(C/G)-3'. Cleavage occurs on the 3'-side of the TT dinucleotide at the point of strand exchange. HJ branch migration catalyzed by RuvA-RuvB allows RuvC to scan DNA until it finds its consensus sequence, where it cleaves and resolves the cruciform DNA. The polypeptide is Crossover junction endodeoxyribonuclease RuvC (Polynucleobacter necessarius subsp. necessarius (strain STIR1)).